We begin with the raw amino-acid sequence, 591 residues long: V-type ATP synthase alpha chain (591 aa).

G233–T240 is an ATP binding site.

This sequence belongs to the ATPase alpha/beta chains family.

It catalyses the reaction ATP + H2O + 4 H(+)(in) = ADP + phosphate + 5 H(+)(out). Functionally, produces ATP from ADP in the presence of a proton gradient across the membrane. The V-type alpha chain is a catalytic subunit. The chain is V-type ATP synthase alpha chain from Streptococcus pyogenes serotype M2 (strain MGAS10270).